The primary structure comprises 161 residues: MKFFAVLALCIVGAIASPLTADEASLVQSSWKAVSHNEVEILAAVFAAYPDIQNKFPQFAGKDLASIKDTGAFATHATRIVSFLSEVIALSGNESNASAVNSLVSKLGDDHKARGVSAAQFGEFRTALVAYLSNHVSWGDNVAAAWNKALDNTYAIVVPRL.

A signal peptide spans 1–16; the sequence is MKFFAVLALCIVGAIA. The Globin domain occupies 18-161; the sequence is PLTADEASLV…NTYAIVVPRL (144 aa). 2 residues coordinate heme b: His-76 and His-111.

Belongs to the globin family. Homodimer.

The sequence is that of Globin CTT-VIIB-8 (CTT-7B8) from Chironomus thummi thummi (Midge).